The chain runs to 624 residues: Chaperone protein HtpG (624 aa).

The a; substrate-binding stretch occupies residues 1–336 (MKGQETRGFQ…SSDLPLNVSR (336 aa)). A b region spans residues 337-552 (EILQDSTVTR…ADEMSTQMAK (216 aa)). The tract at residues 553–624 (LFAAAGQKVP…IRRMNQLLVS (72 aa)) is c.

It belongs to the heat shock protein 90 family. As to quaternary structure, homodimer.

Its subcellular location is the cytoplasm. Molecular chaperone. Has ATPase activity. This is Chaperone protein HtpG from Shigella flexneri.